Here is a 532-residue protein sequence, read N- to C-terminus: Phosphoenolpyruvate carboxykinase (ATP) (532 aa).

3 residues coordinate substrate: Arg60, Tyr194, and Lys200. Residues Lys200, His219, and 237–245 each bind ATP; that span reads GLSGTGKTT. 2 residues coordinate Mn(2+): Lys200 and His219. Residue Asp258 participates in Mn(2+) binding. Positions 286, 324, and 449 each coordinate ATP. Arg324 is a substrate binding site.

It belongs to the phosphoenolpyruvate carboxykinase (ATP) family. The cofactor is Mn(2+).

Its subcellular location is the cytoplasm. The enzyme catalyses oxaloacetate + ATP = phosphoenolpyruvate + ADP + CO2. It functions in the pathway carbohydrate biosynthesis; gluconeogenesis. Functionally, involved in the gluconeogenesis. Catalyzes the conversion of oxaloacetate (OAA) to phosphoenolpyruvate (PEP) through direct phosphoryl transfer between the nucleoside triphosphate and OAA. The sequence is that of Phosphoenolpyruvate carboxykinase (ATP) from Ruegeria pomeroyi (strain ATCC 700808 / DSM 15171 / DSS-3) (Silicibacter pomeroyi).